We begin with the raw amino-acid sequence, 391 residues long: Histidinol-phosphate aminotransferase (391 aa).

Lys-248 bears the N6-(pyridoxal phosphate)lysine mark.

It belongs to the class-II pyridoxal-phosphate-dependent aminotransferase family. Histidinol-phosphate aminotransferase subfamily. Homodimer. It depends on pyridoxal 5'-phosphate as a cofactor.

The catalysed reaction is L-histidinol phosphate + 2-oxoglutarate = 3-(imidazol-4-yl)-2-oxopropyl phosphate + L-glutamate. It participates in amino-acid biosynthesis; L-histidine biosynthesis; L-histidine from 5-phospho-alpha-D-ribose 1-diphosphate: step 7/9. In Shewanella oneidensis (strain ATCC 700550 / JCM 31522 / CIP 106686 / LMG 19005 / NCIMB 14063 / MR-1), this protein is Histidinol-phosphate aminotransferase.